Here is a 164-residue protein sequence, read N- to C-terminus: UPF0561 protein C2orf68 homolog (164 aa).

2 stretches are compositionally biased toward basic and acidic residues: residues 1–13 (MEVIRDGEGESVK) and 35–49 (IARDDYDREVKQAKE). Residues 1–98 (MEVIRDGEGE…WNESSSGTEM (98 aa)) are disordered. Over residues 50 to 64 (KQRRRHTNTPRRPRR) the composition is skewed to basic residues.

Belongs to the UPF0561 family.

The chain is UPF0561 protein C2orf68 homolog from Danio rerio (Zebrafish).